We begin with the raw amino-acid sequence, 194 residues long: Small ribosomal subunit protein uS7 (194 aa).

Belongs to the universal ribosomal protein uS7 family. In terms of assembly, part of the 30S ribosomal subunit.

In terms of biological role, one of the primary rRNA binding proteins, it binds directly to 16S rRNA where it nucleates assembly of the head domain of the 30S subunit. Is located at the subunit interface close to the decoding center. The polypeptide is Small ribosomal subunit protein uS7 (Methanococcus vannielii (strain ATCC 35089 / DSM 1224 / JCM 13029 / OCM 148 / SB)).